The following is a 470-amino-acid chain: Glutamate--tRNA ligase (470 aa).

The 'HIGH' region motif lies at 9-19; it reads PSPTGFLHVGG. The short motif at 236-240 is the 'KMSKS' region element; the sequence is RLSKR. Lys239 lines the ATP pocket.

The protein belongs to the class-I aminoacyl-tRNA synthetase family. Glutamate--tRNA ligase type 1 subfamily. Monomer.

The protein resides in the cytoplasm. The enzyme catalyses tRNA(Glu) + L-glutamate + ATP = L-glutamyl-tRNA(Glu) + AMP + diphosphate. In terms of biological role, catalyzes the attachment of glutamate to tRNA(Glu) in a two-step reaction: glutamate is first activated by ATP to form Glu-AMP and then transferred to the acceptor end of tRNA(Glu). The sequence is that of Glutamate--tRNA ligase from Legionella pneumophila subsp. pneumophila (strain Philadelphia 1 / ATCC 33152 / DSM 7513).